The chain runs to 407 residues: Argininosuccinate synthase (407 aa).

Residues 12–20 (AYSGGLDTS) and Ala39 contribute to the ATP site. L-citrulline-binding residues include Tyr92 and Ser97. Gly122 serves as a coordination point for ATP. 3 residues coordinate L-aspartate: Thr124, Asn128, and Asp129. Asn128 lines the L-citrulline pocket. 5 residues coordinate L-citrulline: Arg132, Ser182, Ser191, Glu267, and Tyr279.

The protein belongs to the argininosuccinate synthase family. Type 1 subfamily. In terms of assembly, homotetramer.

The protein resides in the cytoplasm. The catalysed reaction is L-citrulline + L-aspartate + ATP = 2-(N(omega)-L-arginino)succinate + AMP + diphosphate + H(+). The protein operates within amino-acid biosynthesis; L-arginine biosynthesis; L-arginine from L-ornithine and carbamoyl phosphate: step 2/3. The sequence is that of Argininosuccinate synthase from Campylobacter fetus subsp. fetus (strain 82-40).